We begin with the raw amino-acid sequence, 303 residues long: Plasmodesmata-located protein 1 (303 aa).

An N-terminal signal peptide occupies residues 1-21 (MKLTYQFFIFWFFLPFFAISG). Residues 22–268 (DDDYKNLIFK…GEKRQHTERT (247 aa)) are Extracellular-facing. Gnk2-homologous domains follow at residues 27–136 (NLIF…SSGF) and 141–248 (GTEM…YYSH). 6 cysteine pairs are disulfide-bonded: Cys-33-Cys-108, Cys-84-Cys-93, Cys-96-Cys-127, Cys-149-Cys-226, Cys-202-Cys-211, and Cys-214-Cys-239. A helical membrane pass occupies residues 269–289 (IALAVGGVFVLGFVIVCLLVL). The interval 269–289 (IALAVGGVFVLGFVIVCLLVL) is necessary and sufficient for plasmodesmal targeting. At 290-303 (RSAMKKKSNKYDAY) the chain is on the cytoplasmic side.

The protein belongs to the cysteine-rich repeat secretory protein family. Plasmodesmata-located proteins (PDLD) subfamily. In terms of assembly, interacts with AZI1. Interacts with PDLP5. Does not interact with DIR1. (Microbial infection) Interacts with Grapevine fanleaf virus (GFLV) 2B-MP. Interacts with Cauliflower mosaic virus (CaMV) movement protein. Highly expressed in cell suspension. Expressed in epidermal and spongy mesophyll cells, and the cell wall interface at the base of the leaf trichome (at protein level). Expressed in haustoria-containing cells.

It localises to the cell membrane. The protein localises to the cell junction. It is found in the plasmodesma. In terms of biological role, modulates cell-to-cell trafficking. Required for systemic acquired resistance (SAR) which is mediated by the signaling molecules azelaic acid (AzA), glycerol-3-phosphate (G3P), and salicylic acid (SA). Required for the proper localization and stability of AZI1 which is involved in SAR. Mediates callose deposition during downy mildew fungal infection around haustoria. Haustoria are unicellular protrusions from hyphae and function as the site of molecular exchange of nutrients and effectors between host and pathogen. This Arabidopsis thaliana (Mouse-ear cress) protein is Plasmodesmata-located protein 1.